The chain runs to 1102 residues: PAN2-PAN3 deadenylation complex catalytic subunit PAN2 (1102 aa).

WD repeat units lie at residues 20-59 (DYPRPATALAFDTIAELLWAGNDRGRVVSFYGRDLQRYTA), 104-144 (DEME…IVKQ), and 269-308 (NVMSFINLFEIAPSGEALAMADTECNIHLWGSPSKIHFTD). Positions 308-445 (DMAIPIEMPK…STDELESLKP (138 aa)) are linker. Positions 423-442 (AVPDPKVEQVPESSTDELES) are disordered. Residues 446-833 (EAPPIYRNLE…LPAVLLFQVK (388 aa)) enclose the USP domain. In terms of domain architecture, Exonuclease spans 881 to 1054 (VGLDTEFVSL…EDARTALKLY (174 aa)). Positions 884, 886, 993, and 1046 each coordinate a divalent metal cation.

This sequence belongs to the peptidase C19 family. PAN2 subfamily. As to quaternary structure, forms a heterotrimer with an asymmetric homodimer of the regulatory subunit PAN3 to form the poly(A)-nuclease (PAN) deadenylation complex. The cofactor is a divalent metal cation.

It is found in the cytoplasm. The enzyme catalyses Exonucleolytic cleavage of poly(A) to 5'-AMP.. Its activity is regulated as follows. Positively regulated by the regulatory subunit PAN3. Catalytic subunit of the poly(A)-nuclease (PAN) deadenylation complex, one of two cytoplasmic mRNA deadenylases involved in mRNA turnover. PAN specifically shortens poly(A) tails of RNA and the activity is stimulated by poly(A)-binding protein PAB1. PAN deadenylation is followed by rapid degradation of the shortened mRNA tails by the CCR4-NOT complex. Deadenylated mRNAs are then degraded by two alternative mechanisms, namely exosome-mediated 3'-5' exonucleolytic degradation, or deadenylation-dependent mRNA decaping and subsequent 5'-3' exonucleolytic degradation by XRN1. May also be involved in post-transcriptional maturation of mRNA poly(A) tails. This Chaetomium globosum (strain ATCC 6205 / CBS 148.51 / DSM 1962 / NBRC 6347 / NRRL 1970) (Soil fungus) protein is PAN2-PAN3 deadenylation complex catalytic subunit PAN2.